Reading from the N-terminus, the 881-residue chain is Putative SWI/SNF-related matrix-associated actin-dependent regulator of chromatin subfamily A member 3-like 1 (881 aa).

The Helicase ATP-binding domain maps to Asp-272 to Glu-486. Residue Asp-285–Thr-292 participates in ATP binding. Residues Ser-308–Lys-343 are disordered. Positions Asp-437–His-440 match the DEAH box motif. The segment at Cys-635 to Arg-674 adopts an RING-type zinc-finger fold. The segment at Asp-681–Ser-703 is disordered. The 166-residue stretch at Ala-711–Val-876 folds into the Helicase C-terminal domain.

This sequence belongs to the SNF2/RAD54 helicase family. RAD16 subfamily.

It is found in the nucleus. Functionally, possesses intrinsic ATP-dependent nucleosome-remodeling activity. This activity may be required for transcriptional activation or repression of specific target promoters. The polypeptide is Putative SWI/SNF-related matrix-associated actin-dependent regulator of chromatin subfamily A member 3-like 1 (Arabidopsis thaliana (Mouse-ear cress)).